A 223-amino-acid polypeptide reads, in one-letter code: Transcriptional regulatory protein PhoP (223 aa).

A Response regulatory domain is found at 2–116 (RVLVVEDNAL…EVMARMQALM (115 aa)). Aspartate 51 bears the 4-aspartylphosphate mark. The ompR/PhoB-type DNA-binding region spans 124–222 (SQVISLPPFQ…VRGQGYLFEL (99 aa)).

Phosphorylated by PhoQ.

It is found in the cytoplasm. Functionally, member of the two-component regulatory system PhoQ/PhoP involved in virulence, adaptation to low Mg(2+) environments and the control of acid resistance genes. The sequence is that of Transcriptional regulatory protein PhoP (phoP) from Escherichia coli O157:H7.